A 349-amino-acid chain; its full sequence is Phenylalanine--tRNA ligase alpha subunit (349 aa).

Position 261 (Glu261) interacts with Mg(2+).

This sequence belongs to the class-II aminoacyl-tRNA synthetase family. Phe-tRNA synthetase alpha subunit type 1 subfamily. In terms of assembly, tetramer of two alpha and two beta subunits. Requires Mg(2+) as cofactor.

Its subcellular location is the cytoplasm. The enzyme catalyses tRNA(Phe) + L-phenylalanine + ATP = L-phenylalanyl-tRNA(Phe) + AMP + diphosphate + H(+). This is Phenylalanine--tRNA ligase alpha subunit from Leuconostoc citreum (strain KM20).